Consider the following 435-residue polypeptide: Tol-Pal system protein TolB (435 aa).

The signal sequence occupies residues 1–28 (MVKCSLIRALMVIAGLIGAAAFTTPANA). The interval 288 to 310 (STAAIDTSPSYSPDGARVSFESD) is disordered.

It belongs to the TolB family. In terms of assembly, the Tol-Pal system is composed of five core proteins: the inner membrane proteins TolA, TolQ and TolR, the periplasmic protein TolB and the outer membrane protein Pal. They form a network linking the inner and outer membranes and the peptidoglycan layer.

It is found in the periplasm. In terms of biological role, part of the Tol-Pal system, which plays a role in outer membrane invagination during cell division and is important for maintaining outer membrane integrity. The polypeptide is Tol-Pal system protein TolB (Rhizobium leguminosarum bv. trifolii (strain WSM2304)).